The sequence spans 630 residues: Sodium-dependent serotonin transporter (630 aa).

Residues 1–87 lie on the Cytoplasmic side of the membrane; the sequence is METTALNSQK…ERETWGKKVD (87 aa). Y47 carries the phosphotyrosine modification. The chain crosses the membrane as a helical span at residues 88–112; sequence FLLSVIGYAVDLGNIWRFPYVCYQN. The Na(+) site is built by G94, A96, V97, D98, and N101. Position 98 (D98) interacts with serotonin. Over 113 to 115 the chain is Extracellular; sequence GGG. Residues 116–135 traverse the membrane as a helical segment; it reads AFLLPYIIMAIFGGIPLFYM. Topologically, residues 136–160 are cytoplasmic; it reads ELALGQYHRNGCISIWRKICPIFKG. Y142 carries the post-translational modification Phosphotyrosine. Residues 161-186 form a helical membrane-spanning segment; that stretch reads IGYTICIIAFYIASYYNTIIAWALYY. The Extracellular segment spans residues 187-252; that stretch reads LISSFTDRLP…KGLQDVGGVS (66 aa). C200 and C209 are oxidised to a cystine. 2 N-linked (GlcNAc...) asparagine glycosylation sites follow: N208 and N217. The helical transmembrane segment at 253-271 threads the bilayer; the sequence is WQLTLCIMLIFTIIYFSIW. Residues 272 to 277 lie on the Cytoplasmic side of the membrane; it reads KGVKTS. T276 is subject to Phosphothreonine. Residues 278–297 traverse the membrane as a helical segment; the sequence is GKVVWVTATFPYIVLSVLLV. Residues 298–324 lie on the Extracellular side of the membrane; sequence RGATLPGAWKGVLFYLKPNWQKLLETG. Residues 325 to 347 traverse the membrane as a helical segment; that stretch reads VWIDAAAQIFFSLGPGFGVLLAF. S336 serves as a coordination point for Na(+). The Cytoplasmic segment spans residues 348–360; that stretch reads ASYNKFNNNCYQD. A helical membrane pass occupies residues 361–380; sequence ALVTSAVNCMTSFVSGFVIF. A Na(+)-binding site is contributed by N368. Residues 381-421 lie on the Extracellular side of the membrane; it reads TVLGYMAEMRSEDVSEVAKDAGPSLLFITYAEAIANMPAST. The chain crosses the membrane as a helical span at residues 422–443; the sequence is FFAIIFFLMLITLGLDSTFAGL. L434, D437, and S438 together coordinate Na(+). T439 contacts serotonin. The Cytoplasmic portion of the chain corresponds to 444-463; it reads EGVITAVLDEFPHIWAKHRE. The chain crosses the membrane as a helical span at residues 464-483; that stretch reads WFVLAVVITCFFGSLTTLTF. The Extracellular segment spans residues 484–494; that stretch reads GGAYVVKLLEE. Serotonin-binding residues include E494 and Y495. Residues 495–516 form a helical membrane-spanning segment; it reads YATGPAVLTVVFIEAIAVSWFY. At 517–538 the chain is on the cytoplasmic side; it reads GVTQFCSDVKEMLGFSPGWFWR. Residues 539-558 form a helical membrane-spanning segment; sequence ICWVAVSPVFLLFIICSFLM. F556 and S559 together coordinate serotonin. Topologically, residues 559 to 574 are extracellular; it reads SPPQLRLFQYSYPHWS. Residues 575–595 traverse the membrane as a helical segment; sequence VILGYCIGTSSVICIPTYITY. Over 596 to 630 the chain is Cytoplasmic; the sequence is RLVTTPGTLKERIIKSITPETPTEIPCGDICLNAV. Residues 616 to 624 form an interaction with RAB4A region; the sequence is TPTEIPCGD.

It belongs to the sodium:neurotransmitter symporter (SNF) (TC 2.A.22) family. SLC6A4 subfamily. As to quaternary structure, monomer or homooligomer. Interacts (via C-terminus) with SCAMP2; the interaction is direct and retains transporter molecules intracellularly. Interacts with filamentous actin and STX1A. Interacts (via the N-terminus) with STX1A (via the H3 domain); this interaction regulates SLC4A6 channel conductance. Interacts with SEC23A, SEC24C and PATJ. Interacts with NOS1; the interaction may diminish the cell surface localization of SERT in the brain and, correspondingly, reduce serotonin reuptake. Interacts with TGFB1I1. Interacts with ITGAV:ITGB3. Interacts (via C-terminus) with ITGB3; this interaction regulates SLC6A4 trafficking. Phosphorylation at Thr-276 increases 5-HT uptake and is required for cGMP-mediated SERT regulation. In terms of tissue distribution, expressed in the intestinal crypt epithelial cells (at protein level).

The protein localises to the cell membrane. It localises to the endomembrane system. Its subcellular location is the endosome membrane. It is found in the synapse. The protein resides in the cell junction. The protein localises to the focal adhesion. It localises to the cell projection. Its subcellular location is the neuron projection. The catalysed reaction is serotonin(out) + K(+)(in) + Na(+)(out) + H(+)(in) = serotonin(in) + K(+)(out) + Na(+)(in) + H(+)(out). Its function is as follows. Serotonin transporter that cotransports serotonin with one Na(+) ion in exchange for one K(+) ion and possibly one proton in an overall electroneutral transport cycle. Transports serotonin across the plasma membrane from the extracellular compartment to the cytosol thus limiting serotonin intercellular signaling. Essential for serotonin homeostasis in the central nervous system. In the developing somatosensory cortex, acts in glutamatergic neurons to control serotonin uptake and its trophic functions accounting for proper spatial organization of cortical neurons and elaboration of sensory circuits. In the mature cortex, acts primarily in brainstem raphe neurons to mediate serotonin uptake from the synaptic cleft back into the pre-synaptic terminal thus terminating serotonin signaling at the synapse. Modulates mucosal serotonin levels in the gastrointestinal tract through uptake and clearance of serotonin in enterocytes. Required for enteric neurogenesis and gastrointestinal reflexes. Regulates blood serotonin levels by ensuring rapid high affinity uptake of serotonin from plasma to platelets, where it is further stored in dense granules via vesicular monoamine transporters and then released upon stimulation. Mechanistically, the transport cycle starts with an outward-open conformation having Na1(+) and Cl(-) sites occupied. The binding of a second extracellular Na2(+) ion and serotonin substrate leads to structural changes to outward-occluded to inward-occluded to inward-open, where the Na2(+) ion and serotonin are released into the cytosol. Binding of intracellular K(+) ion induces conformational transitions to inward-occluded to outward-open and completes the cycle by releasing K(+) possibly together with a proton bound to Asp-98 into the extracellular compartment. Na1(+) and Cl(-) ions remain bound throughout the transport cycle. Additionally, displays serotonin-induced channel-like conductance for monovalent cations, mainly Na(+) ions. The channel activity is uncoupled from the transport cycle and may contribute to the membrane resting potential or excitability. This chain is Sodium-dependent serotonin transporter (SLC6A4), found in Cavia porcellus (Guinea pig).